Consider the following 185-residue polypeptide: Ribosome-recycling factor (185 aa).

The protein belongs to the RRF family.

It localises to the cytoplasm. Functionally, responsible for the release of ribosomes from messenger RNA at the termination of protein biosynthesis. May increase the efficiency of translation by recycling ribosomes from one round of translation to another. The chain is Ribosome-recycling factor from Salmonella arizonae (strain ATCC BAA-731 / CDC346-86 / RSK2980).